Consider the following 318-residue polypeptide: Phosphoenolpyruvate transferase (318 aa).

Asp50 lines the 7,8-didemethyl-8-hydroxy-5-deazariboflavin pocket.

It belongs to the CofD family. Homodimer. The cofactor is Mg(2+).

The catalysed reaction is enolpyruvoyl-2-diphospho-5'-guanosine + 7,8-didemethyl-8-hydroxy-5-deazariboflavin = dehydro coenzyme F420-0 + GMP + H(+). It functions in the pathway cofactor biosynthesis; coenzyme F420 biosynthesis. In terms of biological role, catalyzes the transfer of the phosphoenolpyruvate moiety from enoylpyruvoyl-2-diphospho-5'-guanosine (EPPG) to 7,8-didemethyl-8-hydroxy-5-deazariboflavin (FO) with the formation of dehydro coenzyme F420-0 and GMP. The polypeptide is Phosphoenolpyruvate transferase (Streptomyces griseus subsp. griseus (strain JCM 4626 / CBS 651.72 / NBRC 13350 / KCC S-0626 / ISP 5235)).